Consider the following 323-residue polypeptide: Caspase-1 (323 aa).

A propeptide spanning residues 1–33 (MTDECVTRNYGVGIRSPNGSENRGSFIMADNTD) is cleaved from the precursor. Catalysis depends on residues His154 and Cys196. A propeptide spanning residues 203 to 215 (GGITLEKGVTETD) is cleaved from the precursor.

The protein belongs to the peptidase C14A family. In terms of assembly, heterotetramer that consists of two anti-parallel arranged heterodimers, each one formed by a 22 kDa (p22) and a 13 kDa (p13) subunit.

Involved in the activation cascade of caspases responsible for apoptosis execution. Proteolytically cleaves poly(ADP-ribose) polymerase (PARP). Loss of zygotic DCP-1 function causes larval lethality and melanotic tumors. The polypeptide is Caspase-1 (Dcp-1) (Drosophila melanogaster (Fruit fly)).